A 570-amino-acid chain; its full sequence is Putative ABC transporter ATP-binding protein SACOL2708 (570 aa).

2 ABC transporter domains span residues 6–247 (ISFK…GIRE) and 304–537 (LELN…ASLR). Residues 40 to 47 (GASGSGKS) and 338 to 345 (GHNGAGKS) contribute to the ATP site.

It belongs to the ABC transporter superfamily.

The protein resides in the cell membrane. Functionally, probably part of an ABC transporter complex. Responsible for energy coupling to the transport system. This is Putative ABC transporter ATP-binding protein SACOL2708 from Staphylococcus aureus (strain COL).